Here is a 394-residue protein sequence, read N- to C-terminus: Elongation factor Tu (394 aa).

Positions 10 to 204 (KPHVNVGTIG…HLDTYIPEPE (195 aa)) constitute a tr-type G domain. Positions 19-26 (GHVDHGKT) are G1. 19–26 (GHVDHGKT) serves as a coordination point for GTP. T26 serves as a coordination point for Mg(2+). The G2 stretch occupies residues 60 to 64 (GITIN). The interval 81 to 84 (DCPG) is G3. Residues 81–85 (DCPGH) and 136–139 (NKCD) contribute to the GTP site. The segment at 136–139 (NKCD) is G4. The interval 174–176 (SAL) is G5.

Belongs to the TRAFAC class translation factor GTPase superfamily. Classic translation factor GTPase family. EF-Tu/EF-1A subfamily. As to quaternary structure, monomer.

Its subcellular location is the cytoplasm. The catalysed reaction is GTP + H2O = GDP + phosphate + H(+). GTP hydrolase that promotes the GTP-dependent binding of aminoacyl-tRNA to the A-site of ribosomes during protein biosynthesis. In Actinobacillus pleuropneumoniae serotype 5b (strain L20), this protein is Elongation factor Tu.